The chain runs to 280 residues: Urease accessory protein UreD 1 (280 aa).

Belongs to the UreD family. As to quaternary structure, ureD, UreF and UreG form a complex that acts as a GTP-hydrolysis-dependent molecular chaperone, activating the urease apoprotein by helping to assemble the nickel containing metallocenter of UreC. The UreE protein probably delivers the nickel.

The protein resides in the cytoplasm. In terms of biological role, required for maturation of urease via the functional incorporation of the urease nickel metallocenter. In Brucella melitensis biotype 1 (strain ATCC 23456 / CCUG 17765 / NCTC 10094 / 16M), this protein is Urease accessory protein UreD 1.